Consider the following 157-residue polypeptide: Nascent polypeptide-associated complex subunit beta-1 (157 aa).

2 disordered regions span residues 19-42 (KVGGTRRKLNKKAGSSAGANKDDT) and 126-157 (EKHEAKAPADAEKKDEAIPELVEGQTFDADVE). The NAC-A/B domain occupies 38–103 (NKDDTKLQSQ…PQEKNLQDLF (66 aa)). A compositionally biased stretch (basic and acidic residues) spans 126–142 (EKHEAKAPADAEKKDEA). Thr151 carries the phosphothreonine modification.

This sequence belongs to the NAC-beta family. As to quaternary structure, part of the nascent polypeptide-associated complex (NAC), consisting of EGD2 and either EGD1 or BTT1. NAC associates with ribosomes via EGD1 or BTT1, and with the CCR4-NOT complex.

Its subcellular location is the cytoplasm. The protein localises to the nucleus. Component of the nascent polypeptide-associated complex (NAC), a dynamic component of the ribosomal exit tunnel, protecting the emerging polypeptides from interaction with other cytoplasmic proteins to ensure appropriate nascent protein targeting. The NAC complex also promotes mitochondrial protein import by enhancing productive ribosome interactions with the outer mitochondrial membrane and blocks the inappropriate interaction of ribosomes translating non-secretory nascent polypeptides with translocation sites in the membrane of the endoplasmic reticulum. EGD1 may act as a transcription factor that exert a negative effect on the expression of several genes that are transcribed by RNA polymerase II. The chain is Nascent polypeptide-associated complex subunit beta-1 (EGD1) from Saccharomyces cerevisiae (strain YJM789) (Baker's yeast).